Consider the following 312-residue polypeptide: Ribosomal protein L11 methyltransferase (312 aa).

T160, G181, D203, and N246 together coordinate S-adenosyl-L-methionine.

It belongs to the methyltransferase superfamily. PrmA family.

The protein localises to the cytoplasm. It catalyses the reaction L-lysyl-[protein] + 3 S-adenosyl-L-methionine = N(6),N(6),N(6)-trimethyl-L-lysyl-[protein] + 3 S-adenosyl-L-homocysteine + 3 H(+). Functionally, methylates ribosomal protein L11. This chain is Ribosomal protein L11 methyltransferase, found in Staphylococcus aureus (strain COL).